The chain runs to 80 residues: Conotoxin Bu3 (80 aa).

The signal sequence occupies residues 1–22 (MKLMCVLIVSVLVLTACQLSTA). The propeptide occupies 23 to 51 (DDTRDKQKDRLVRLFRKKRDSSDSGLLPR). 3 disulfide bridges follow: Cys-53/Cys-69, Cys-60/Cys-72, and Cys-68/Cys-79.

Belongs to the conotoxin O1 superfamily. Expressed by the venom duct.

It is found in the secreted. This chain is Conotoxin Bu3, found in Conus bullatus (Bubble cone).